The sequence spans 368 residues: Histone macroH2A1.1 (368 aa).

Residues 154–177 (AVSSSSAAASSSSSASSSSSVAPK) form a disordered region. The 185-residue stretch at 184-368 (TILSKKTLHL…VYNAELINTN (185 aa)) folds into the Macro domain. A glycoprotein contacts are provided by D203, L204, Q225, V226, S275, G313, S314, G315, N316, and N317.

This sequence belongs to the histone H2A family. In terms of assembly, the nucleosome is a histone octamer containing two molecules each of H2A, H2B, H3 and H4 assembled in one H3-H4 heterotetramer and two H2A-H2B heterodimers.

The protein localises to the nucleus. The protein resides in the chromosome. Its function is as follows. Variant histone H2A which replaces conventional H2A in a subset of nucleosomes where it represses transcription. Nucleosomes wrap and compact DNA into chromatin, limiting DNA accessibility to the cellular machineries which require DNA as a template. Histones thereby play a central role in transcription regulation, DNA repair, DNA replication and chromosomal stability. DNA accessibility is regulated via a complex set of post-translational modifications of histones, also called histone code, and nucleosome remodeling. Specifically binds poly-ADP-ribose and plays a key role in NAD(+) metabolism. Able to bind to the ends of poly-ADP-ribose chains created by PARP1 and cap them. This prevents PARP1 from further addition of ADP-ribose and thus limits the consumption of nuclear NAD(+), allowing the cell to maintain proper NAD(+) levels in both the nucleus and the mitochondria to promote proper mitochondrial respiration. The chain is Histone macroH2A1.1 from Capsaspora owczarzaki (strain ATCC 30864).